The primary structure comprises 95 residues: Cell division topological specificity factor (95 aa).

This sequence belongs to the MinE family.

In terms of biological role, prevents the cell division inhibition by proteins MinC and MinD at internal division sites while permitting inhibition at polar sites. This ensures cell division at the proper site by restricting the formation of a division septum at the midpoint of the long axis of the cell. The chain is Cell division topological specificity factor from Methylorubrum extorquens (strain PA1) (Methylobacterium extorquens).